Reading from the N-terminus, the 369-residue chain is Uroporphyrinogen decarboxylase (369 aa).

Substrate-binding positions include 28–32 (RQAGR), Asp-78, Tyr-154, Ser-209, and His-339.

The protein belongs to the uroporphyrinogen decarboxylase family. Homodimer.

It localises to the cytoplasm. It catalyses the reaction uroporphyrinogen III + 4 H(+) = coproporphyrinogen III + 4 CO2. It participates in porphyrin-containing compound metabolism; protoporphyrin-IX biosynthesis; coproporphyrinogen-III from 5-aminolevulinate: step 4/4. In terms of biological role, catalyzes the decarboxylation of four acetate groups of uroporphyrinogen-III to yield coproporphyrinogen-III. In Polaromonas naphthalenivorans (strain CJ2), this protein is Uroporphyrinogen decarboxylase.